A 454-amino-acid polypeptide reads, in one-letter code: MAYQMASLKIEMKEVVHVKPSKPTPSIVLPLSTLDHRPYPDSIWPIVHVYQSPSNGQLDPAFVLKQALSKALVYYYPLAGKLVKQPNGKVAINCNNDGVPFLEAIANCELSSLNYLDDHDIRIAKQLVFDFHPQQDENEYPHPVSFKLTKFQCGGFTIGMSTSHIVCDGWGACKFFHAIVELASGKSEPFLKPVWERERLIGSITTQPMPNPMDEATAAVSPFLPATDVMYELFKVDKESIRRLKMSLMKEISCNESMEQGFTTFESLAAYVWRSRARALNLNNEGKTLLVFSVQVRQHMSPPLSDGYYGTAITEGQVVLTMKELNEKPLSDIVKLVKESKNVAFTGDFIKKTIDTLESNPENFNVEEGPGATLALSDWKHLGFMPNVDFGWKEPINMVPAPCNMFEYEGLCIFLSPSNHDPSMEGGVRVFISLPSVAMPKFKEEMEALKVITP.

Active-site proton acceptor residues include His-164 and Asp-389.

This sequence belongs to the plant acyltransferase family. Monomer.

The enzyme catalyses tetrahydroanabasine + acetyl-CoA = ammodendrine + CoA. It functions in the pathway alkaloid biosynthesis. Tetrahydroanabasine acetyltransferase involved in the accumulation of quinolizidine type antinutritional alkaloids (QAs) natural products. QAs impart a bitter taste to plants, acting as repellents and toxicants for herbivores and predators, and possess a variety of pharmacological effects, including sedative, anticonvulsant, anti-inflammatory, antiviral, antitumor, antipyretic, anti-hepatitis B, antifibrotic, antiallergic, antidiarrheal, analgesic and antimicrobial activities. Mediates the conversion of tetrahydroanabasine into ammodendrine. This Lupinus albus (White lupine) protein is Tetrahydroanabasine acetyltransferase.